A 201-amino-acid polypeptide reads, in one-letter code: Recombination protein RecR (201 aa).

The segment at 60-75 (CSCCGNVDTSDPCTIC) adopts a C4-type zinc-finger fold. The region spanning 83-178 (ATLIVVEDVS…RVTRLAHGVP (96 aa)) is the Toprim domain.

Belongs to the RecR family.

May play a role in DNA repair. It seems to be involved in an RecBC-independent recombinational process of DNA repair. It may act with RecF and RecO. The chain is Recombination protein RecR from Brucella abortus biovar 1 (strain 9-941).